Consider the following 123-residue polypeptide: Glutaredoxin-like protein (123 aa).

The Glutaredoxin domain maps to 27–123; it reads INEVEESITN…GTLFNDLKKK (97 aa).

This sequence belongs to the glutaredoxin family.

This chain is Glutaredoxin-like protein (grxB), found in Dictyostelium discoideum (Social amoeba).